Here is a 336-residue protein sequence, read N- to C-terminus: MRILGIETSCDETGVAVIDAERGLLSHALYSQVALHAEYGGVVPELASRDHIRKLLPLVRQALDGADTAASDLTGIAYTSGPGLLGALLVGAGVARSLAWAWGLPAVGVHHMEGHLLAPLLGDEPPEFPFLALLVSGGHTMLVDVQGVGRYRILGESLDDAAGEAFDKTAKLLGLSYPGGPALAALAERGDPARFSFPRPMTDRPGLDFSFSGLKTRALTTLRETRTEQDRADVARAFEEAVVDTLVIKCLRAVQETGAERLVVAGGVGANRRLRQRLKEAVGAEGASVHYPPFEFCTDNGAMIALAGLMRFQAGAGEDLTIRARARWNLESKSEV.

His111 and His115 together coordinate Fe cation. Residues 134-138 (LVSGG), Asp167, Gly180, and Asn271 contribute to the substrate site. Asp299 lines the Fe cation pocket.

This sequence belongs to the KAE1 / TsaD family. Fe(2+) serves as cofactor.

It localises to the cytoplasm. It catalyses the reaction L-threonylcarbamoyladenylate + adenosine(37) in tRNA = N(6)-L-threonylcarbamoyladenosine(37) in tRNA + AMP + H(+). In terms of biological role, required for the formation of a threonylcarbamoyl group on adenosine at position 37 (t(6)A37) in tRNAs that read codons beginning with adenine. Is involved in the transfer of the threonylcarbamoyl moiety of threonylcarbamoyl-AMP (TC-AMP) to the N6 group of A37, together with TsaE and TsaB. TsaD likely plays a direct catalytic role in this reaction. The sequence is that of tRNA N6-adenosine threonylcarbamoyltransferase from Thioalkalivibrio sulfidiphilus (strain HL-EbGR7).